A 405-amino-acid polypeptide reads, in one-letter code: Tryptophan synthase beta chain (405 aa).

At lysine 95 the chain carries N6-(pyridoxal phosphate)lysine.

Belongs to the TrpB family. In terms of assembly, tetramer of two alpha and two beta chains. Requires pyridoxal 5'-phosphate as cofactor.

It carries out the reaction (1S,2R)-1-C-(indol-3-yl)glycerol 3-phosphate + L-serine = D-glyceraldehyde 3-phosphate + L-tryptophan + H2O. It functions in the pathway amino-acid biosynthesis; L-tryptophan biosynthesis; L-tryptophan from chorismate: step 5/5. In terms of biological role, the beta subunit is responsible for the synthesis of L-tryptophan from indole and L-serine. This chain is Tryptophan synthase beta chain, found in Pseudomonas putida (strain GB-1).